The primary structure comprises 224 residues: Pleckstrin homology domain-containing family B member 2 (224 aa).

The 108-residue stretch at 2–109 (AFVKSGWLLR…WKIALQDART (108 aa)) folds into the PH domain. An a 1,2-diacyl-sn-glycero-3-phospho-L-serine-binding site is contributed by K20.

Its subcellular location is the recycling endosome membrane. Functionally, involved in retrograde transport of recycling endosomes. The protein is Pleckstrin homology domain-containing family B member 2 (PLEKHB2) of Gallus gallus (Chicken).